The sequence spans 119 residues: Fluoride-specific ion channel FluC (119 aa).

A run of 4 helical transmembrane segments spans residues 5–25 (ILPL…LNLA), 30–50 (LSPA…IGIF), 59–79 (WKLL…GFSL), and 92–112 (SALA…WLGL). Na(+) is bound by residues Gly69 and Thr72.

This sequence belongs to the fluoride channel Fluc/FEX (TC 1.A.43) family.

Its subcellular location is the cell inner membrane. The catalysed reaction is fluoride(in) = fluoride(out). With respect to regulation, na(+) is not transported, but it plays an essential structural role and its presence is essential for fluoride channel function. Its function is as follows. Fluoride-specific ion channel. Important for reducing fluoride concentration in the cell, thus reducing its toxicity. In Neisseria gonorrhoeae (strain NCCP11945), this protein is Fluoride-specific ion channel FluC.